A 590-amino-acid chain; its full sequence is MTVNGWLQIGIFIAAVLLGAKPLGVYMAAVFERRHTWLDPVLVPVEKLLYRLTAVKAEEEMHWTAYCASMLIFSAATMLLTYLIERVQQFLPLNPQHLGGVPAQLAWNTAISFTTNTNWQAYTPESTMSYLTQMVGLATHNFWSAAVGIALAIAFIRGIARKEMKTLGNFWVDMTRAILWVLLPICVVFALVLTSQGVIQNLKSYTVAHVVQPQSQTQTVNGKTVTTTDSTQTIAQGPVASQEAIKMLGTNGGGFFNANSSHPFENPTPLSNMLEMISIFLIPAGLTVTLGQMTGSPRHGWAVLGAMLILWFAGVATCYWAEAQPNPLFHGVNQQATALQAGGNMEGKEVRFGIADSALFATVTTDASCGAVNAMHDSFMPLGGMVPLTNIMLGEIVFGGVGAGLYGMLVFVIVAVFIAGLMVGRTPEYLGNKIQAYDVQMAMLYLLIFPLIILGFSAVAVLTPHLGLPSISNPGPHGLTQILYAYSSATGNNGSAFAGLNANTSWYNLSLGFAMFIGRFLMIVPMLALAGNLAQKKNVPETLGTFPVTTPLFTVLLTSVIIVVGALTFLPALSLGPILEHLLLQAGRTF.

10 helical membrane-spanning segments follow: residues 11–31 (IFIAAVLLGAKPLGVYMAAVF), 64–84 (TAYCASMLIFSAATMLLTYLI), 136–156 (GLATHNFWSAAVGIALAIAFI), 178–198 (ILWVLLPICVVFALVLTSQGV), 273–293 (MLEMISIFLIPAGLTVTLGQM), 301–321 (WAVLGAMLILWFAGVATCYWA), 403–423 (AGLYGMLVFVIVAVFIAGLMV), 442–462 (AMLYLLIFPLIILGFSAVAVL), 511–531 (LGFAMFIGRFLMIVPMLALAG), and 552–572 (LFTVLLTSVIIVVGALTFLPA).

It belongs to the KdpA family. In terms of assembly, the system is composed of three essential subunits: KdpA, KdpB and KdpC.

It is found in the cell inner membrane. Its function is as follows. Part of the high-affinity ATP-driven potassium transport (or Kdp) system, which catalyzes the hydrolysis of ATP coupled with the electrogenic transport of potassium into the cytoplasm. This subunit binds the periplasmic potassium ions and delivers the ions to the membrane domain of KdpB through an intramembrane tunnel. The sequence is that of Potassium-transporting ATPase potassium-binding subunit from Acidobacterium capsulatum (strain ATCC 51196 / DSM 11244 / BCRC 80197 / JCM 7670 / NBRC 15755 / NCIMB 13165 / 161).